The following is a 352-amino-acid chain: Mas-related G-protein coupled receptor member X2 (352 aa).

Residues 1–45 lie on the Extracellular side of the membrane; that stretch reads MEERNISGRDLRVDSNITYWGTNITAVNESNHTGMSFCEVVSCTM. N-linked (GlcNAc...) asparagine glycosylation is found at N5, N16, N23, N28, and N31. Residues 46–66 traverse the membrane as a helical segment; that stretch reads VFLSLIVALVGLVGNATVLWF. Topologically, residues 67 to 75 are cytoplasmic; it reads LGFQMRRNA. Residues 76-96 traverse the membrane as a helical segment; sequence FSVYILNLAGADFLFICFQIG. Topologically, residues 97-107 are extracellular; it reads YCFHMILDIDS. The helical transmembrane segment at 108–128 threads the bilayer; that stretch reads IPIEIDLFYLVVLNFPYFCGL. At 129 to 155 the chain is on the cytoplasmic side; that stretch reads SILSAISIERCLSVMWPIWYHCQRPRH. A helical transmembrane segment spans residues 156 to 176; it reads TSAVICTLLWVLSLVCSLLEG. Topologically, residues 177–195 are extracellular; the sequence is KECGFLYYTSDPGWCKTFD. Residues 196 to 216 traverse the membrane as a helical segment; the sequence is LITATWLIVLFVALLGSSLAL. Residues 217 to 239 lie on the Cytoplasmic side of the membrane; sequence VITIFWGLHKIPVTRLYVAIVFT. Residues 240–260 form a helical membrane-spanning segment; that stretch reads VLVFLLFGLPYGIYWFLLVWI. The Extracellular portion of the chain corresponds to 261–275; sequence EKFYYVLPCSIYPVT. The chain crosses the membrane as a helical span at residues 276–296; the sequence is VFLSCVNSSAKPIIYCLVGSI. The Cytoplasmic portion of the chain corresponds to 297 to 347; it reads RHHRFQRKTLKLFLQRAMQDTPEEEECGEMGSSGRSREIKTIWKGLRAALI.

Belongs to the G-protein coupled receptor 1 family. Mas subfamily.

It is found in the cell membrane. Its function is as follows. Orphan receptor. Probably involved in the function of nociceptive neurons. May regulate nociceptor function and/or development, including the sensation or modulation of pain. This is Mas-related G-protein coupled receptor member X2 (Mrgprx2) from Mus musculus (Mouse).